A 961-amino-acid polypeptide reads, in one-letter code: Probable inorganic carbon transporter subunit DabA (961 aa).

The Zn(2+) site is built by Cys406, Asp408, His653, and Cys668.

It belongs to the inorganic carbon transporter (TC 9.A.2) DabA family. In terms of assembly, forms a complex with DabB. Zn(2+) is required as a cofactor.

Its subcellular location is the cell inner membrane. Functionally, part of an energy-coupled inorganic carbon pump. The chain is Probable inorganic carbon transporter subunit DabA from Hydrogenobaculum sp. (strain Y04AAS1).